A 199-amino-acid chain; its full sequence is Prolactin-2 (199 aa).

3 disulfide bridges follow: Cys-4/Cys-11, Cys-58/Cys-174, and Cys-191/Cys-199.

It belongs to the somatotropin/prolactin family.

The protein localises to the secreted. The sequence is that of Prolactin-2 from Crocodylus novaeguineae (Crocodile).